Consider the following 283-residue polypeptide: Pantothenate synthetase (283 aa).

26-33 (MGNLHAGH) provides a ligand contact to ATP. His33 functions as the Proton donor in the catalytic mechanism. Residue Gln57 coordinates (R)-pantoate. A beta-alanine-binding site is contributed by Gln57. ATP is bound at residue 144–147 (GRKD). Residue Gln150 participates in (R)-pantoate binding. Residues Leu173 and 181–184 (MSSR) contribute to the ATP site.

It belongs to the pantothenate synthetase family. As to quaternary structure, homodimer.

The protein resides in the cytoplasm. It carries out the reaction (R)-pantoate + beta-alanine + ATP = (R)-pantothenate + AMP + diphosphate + H(+). It participates in cofactor biosynthesis; (R)-pantothenate biosynthesis; (R)-pantothenate from (R)-pantoate and beta-alanine: step 1/1. Catalyzes the condensation of pantoate with beta-alanine in an ATP-dependent reaction via a pantoyl-adenylate intermediate. In Thiobacillus denitrificans (strain ATCC 25259 / T1), this protein is Pantothenate synthetase.